Reading from the N-terminus, the 528-residue chain is Ulvan lyase, short isoform (528 aa).

Positions M1–A29 are cleaved as a signal peptide. Residue C30 is the site of N-palmitoyl cysteine attachment. The S-diacylglycerol cysteine moiety is linked to residue C30. S151–H152 provides a ligand contact to substrate. The Proton donor/acceptor role is filled by H152. Residues D218, D228, and K230 each contribute to the Ca(2+) site. Positions 309 and 326 each coordinate substrate. Ca(2+)-binding residues include N329, D332, and F334. H390 is a binding site for substrate.

The protein belongs to the polysaccharide lyase 24 family.

It is found in the secreted. Its subcellular location is the cell membrane. Its function is as follows. Ulvan lyase involved in ulvan degradation. Ulvan is the main polysaccharide component of the Ulvales (green seaweed) cell wall. It is composed of disaccharide building blocks comprising 3-sulfated rhamnose (Rha3S) linked to D-glucuronic acid (GlcA), L-iduronic acid (IduA), or D-xylose (Xyl). Ulvan lyase catalyzes preferentially the endolytic cleavage of the glycosidic bond between Rha3S and the uronic acid GlcA, but not IduA, producing oligosaccharides that have unsaturated 4-deoxy-L-threo-hex-4-enopyranosiduronic acid (deltaUA) at the non-reducing end. The most abundant end products in the degradation of the ulvan polysaccharide were deltaUA-Rha3S disaccharides and deltaUA-Rha3S-IduA-Rha3S and deltaUA-Rha3S-Xyl-Rha3S tetrasaccharides. The polypeptide is Ulvan lyase, short isoform (Alteromonas sp. (strain LOR)).